The following is a 514-amino-acid chain: Cilia- and flagella-associated protein 53 (514 aa).

Coiled coils occupy residues 91 to 148 and 203 to 474; these read IINI…RQDF and KLWE…REFE.

Belongs to the CFAP53 family. In terms of assembly, microtubule inner protein component of sperm flagellar doublet microtubules. Interacts with PIERCE1 and PIERCE2; the interactions link outer dynein arms docking complex (ODA-DC) to the internal microtubule inner proteins (MIP) in cilium axoneme. Interacts with CCDC38. Interacts with CCDC42 and IFT88. Interacts with centriolar satellite proteins PIBF1/CEP90 and PCM1. Interacts with dyneins DNAIC1, DNAIC2 AND DNAH11 and with ODA-DC component ODAD4/TTC25. As to expression, expressed in skin fibroblasts (at protein level). Expressed in nasal respiratory epithelial cells (at protein level). Expressed in airway epithelial cells.

The protein resides in the cytoplasm. It is found in the cytoskeleton. It localises to the cilium axoneme. Its subcellular location is the flagellum axoneme. The protein localises to the microtubule organizing center. The protein resides in the centrosome. It is found in the centriole. It localises to the centriolar satellite. Its subcellular location is the spindle pole. The protein localises to the cell projection. The protein resides in the cilium. In terms of biological role, microtubule inner protein (MIP) part of the dynein-decorated doublet microtubules (DMTs) in cilia axoneme, which is required for motile cilia beating. Regulates motility patterns of both 9+0 and 9+2 motile cilia through differential localization and recruitment of axonemal dynein components. Required for centriolar satellite integrity and non-motile cilium assembly. Required for motile cilium formation. Through its role in the beating of primary cilia, involved in the establishment of organ laterality during embryogenesis. Required for sperm flagellum biogenesis and is essential for male fertility. The polypeptide is Cilia- and flagella-associated protein 53 (Homo sapiens (Human)).